Reading from the N-terminus, the 874-residue chain is Alanine--tRNA ligase (874 aa).

4 residues coordinate Zn(2+): His564, His568, Cys665, and His669.

Belongs to the class-II aminoacyl-tRNA synthetase family. It depends on Zn(2+) as a cofactor.

The protein localises to the cytoplasm. It catalyses the reaction tRNA(Ala) + L-alanine + ATP = L-alanyl-tRNA(Ala) + AMP + diphosphate. Functionally, catalyzes the attachment of alanine to tRNA(Ala) in a two-step reaction: alanine is first activated by ATP to form Ala-AMP and then transferred to the acceptor end of tRNA(Ala). Also edits incorrectly charged Ser-tRNA(Ala) and Gly-tRNA(Ala) via its editing domain. This Paraburkholderia xenovorans (strain LB400) protein is Alanine--tRNA ligase.